The chain runs to 513 residues: Ribonuclease Y (513 aa).

A helical transmembrane segment spans residues 6–26 (YIIIAVVIIIICVILGLYVVD). A disordered region spans residues 35-59 (EASKEARRLKEEAERDAEAKKKEAI). One can recognise a KH domain in the interval 203 to 288 (TVHVVNLPND…EMVEKAKKEV (86 aa)). Positions 329 to 422 (VLKHSIEVSH…VQAADAISAA (94 aa)) constitute an HD domain.

Belongs to the RNase Y family.

It is found in the cell membrane. Its function is as follows. Endoribonuclease that initiates mRNA decay. The chain is Ribonuclease Y from Clostridium botulinum (strain Okra / Type B1).